We begin with the raw amino-acid sequence, 62 residues long: Conotoxin TxIC (62 aa).

Residues 1-22 form the signal peptide; that stretch reads MHCLPIFVILLLLTASGPSVDA. Residues 23-47 constitute a propeptide that is removed on maturation; sequence QLKTKDDVPLSSFRDHAKSTLRRLQ. Intrachain disulfides connect Cys-52-Cys-58 and Cys-53-Cys-61. 4-hydroxyproline is present on Pro-60. Cys-61 carries the cysteine amide modification.

Belongs to the conotoxin A superfamily. Expressed by the venom duct.

It localises to the secreted. The protein is Conotoxin TxIC of Conus textile (Cloth-of-gold cone).